Reading from the N-terminus, the 379-residue chain is Tryptophan 2,3-dioxygenase (379 aa).

Residues 57-61 and Arg-128 each bind substrate; that span reads FIITH. His-312 serves as a coordination point for heme. Thr-327 is a binding site for substrate.

This sequence belongs to the tryptophan 2,3-dioxygenase family. As to quaternary structure, homotetramer. Dimer of dimers. Heme serves as cofactor.

It carries out the reaction L-tryptophan + O2 = N-formyl-L-kynurenine. The protein operates within amino-acid degradation; L-tryptophan degradation via kynurenine pathway; L-kynurenine from L-tryptophan: step 1/2. It participates in pigment biosynthesis; ommochrome biosynthesis. Its function is as follows. Heme-dependent dioxygenase that catalyzes the oxidative cleavage of the L-tryptophan (L-Trp) pyrrole ring and converts L-tryptophan to N-formyl-L-kynurenine. Catalyzes the oxidative cleavage of the indole moiety. Required during larval growth to control the level of potentially harmful free tryptophan in the hemolymph. In the adult the same reaction is the first step in the ommochrome biosynthetic pathway. The polypeptide is Tryptophan 2,3-dioxygenase (Drosophila melanogaster (Fruit fly)).